The sequence spans 160 residues: Large ribosomal subunit protein bL17 (160 aa).

The interval 128-160 (KKATKTRRSRKRKSADVVVEAAPAEETPKAAEE) is disordered. Over residues 129 to 140 (KATKTRRSRKRK) the composition is skewed to basic residues.

It belongs to the bacterial ribosomal protein bL17 family. Part of the 50S ribosomal subunit. Contacts protein L32.

This chain is Large ribosomal subunit protein bL17, found in Porphyromonas gingivalis (strain ATCC 33277 / DSM 20709 / CIP 103683 / JCM 12257 / NCTC 11834 / 2561).